The sequence spans 340 residues: N(4)-(Beta-N-acetylglucosaminyl)-L-asparaginase (340 aa).

A signal peptide spans 1–45; that stretch reads MRIIYKQQTMNNNRRDFIKKLGIATAAIAINPLEAKNLLDTSEPK. Residue Thr-197 is the Nucleophile of the active site. Residues 225 to 228 and 248 to 251 each bind substrate; these read RVGD and TGHG.

The protein belongs to the Ntn-hydrolase family. As to quaternary structure, heterotetramer of two alpha and two beta chains arranged as a dimer of alpha/beta heterodimers. Cleaved into an alpha and beta chain by autocatalysis; this activates the enzyme. The N-terminal residue of the beta subunit is responsible for the nucleophile hydrolase activity.

It localises to the periplasm. It catalyses the reaction N(4)-(beta-N-acetyl-D-glucosaminyl)-L-asparagine + H2O = N-acetyl-beta-D-glucosaminylamine + L-aspartate + H(+). Its function is as follows. Cleaves the GlcNAc-Asn bond which joins oligosaccharides to the peptide of asparagine-linked glycoproteins. Requires that the glycosylated asparagine moiety is not substituted on its N-(R1) and C- (R2) terminus. The polypeptide is N(4)-(Beta-N-acetylglucosaminyl)-L-asparaginase (Elizabethkingia miricola (Chryseobacterium miricola)).